Reading from the N-terminus, the 239-residue chain is 1-(5-phosphoribosyl)-5-[(5-phosphoribosylamino)methylideneamino] imidazole-4-carboxamide isomerase (239 aa).

The active-site Proton acceptor is the aspartate 9. Aspartate 131 (proton donor) is an active-site residue.

This sequence belongs to the HisA/HisF family.

It localises to the cytoplasm. The enzyme catalyses 1-(5-phospho-beta-D-ribosyl)-5-[(5-phospho-beta-D-ribosylamino)methylideneamino]imidazole-4-carboxamide = 5-[(5-phospho-1-deoxy-D-ribulos-1-ylimino)methylamino]-1-(5-phospho-beta-D-ribosyl)imidazole-4-carboxamide. It participates in amino-acid biosynthesis; L-histidine biosynthesis; L-histidine from 5-phospho-alpha-D-ribose 1-diphosphate: step 4/9. The protein is 1-(5-phosphoribosyl)-5-[(5-phosphoribosylamino)methylideneamino] imidazole-4-carboxamide isomerase of Parabacteroides distasonis (strain ATCC 8503 / DSM 20701 / CIP 104284 / JCM 5825 / NCTC 11152).